We begin with the raw amino-acid sequence, 600 residues long: Copine-A (600 aa).

C2 domains lie at 1–111 (MNLK…TVCL) and 116–246 (KSGK…NVIN). Residues Asp-23, Asp-29, Asp-82, Asp-84, Asp-89, Asp-151, Asp-158, Asp-215, Asp-217, and Asp-223 each coordinate Ca(2+). The 218-residue stretch at 286 to 503 (NLIVGIDCTA…ELAAEVLREI (218 aa)) folds into the VWFA domain. Residues 535–549 (YDNPTTTTTATSPST) are compositionally biased toward low complexity. The interval 535–583 (YDNPTTTTTATSPSTGIDLNKGSNVGLNLTKTESSPSPSGGAGIDLNKG) is disordered. Polar residues predominate over residues 555–572 (KGSNVGLNLTKTESSPSP).

Belongs to the copine family. Ca(2+) serves as cofactor.

It is found in the cytoplasm. Its subcellular location is the membrane. Required for cytokinesis, contractile vacuole function and development. The sequence is that of Copine-A (cpnA) from Dictyostelium discoideum (Social amoeba).